The chain runs to 138 residues: Basic phospholipase A2 homolog Tbo-K49 (138 aa).

Residues 1–16 (MRTLWIMAVLLVGVEG) form the signal peptide. 6 disulfides stabilise this stretch: C42–C131, C44–C60, C59–C111, C65–C138, C66–C104, and C91–C102. The important for membrane-damaging activities in eukaryotes and bacteria; heparin-binding stretch occupies residues 121–133 (KKERINTKIFCKK).

Monomer. Expressed by the venom gland.

It localises to the secreted. Functionally, snake venom phospholipase A2 homolog that lacks catalytic activity. It induces local edema. Is myotoxic. A model of myotoxic mechanism has been proposed: an apo Lys49-PLA2 is activated by the entrance of a hydrophobic molecule (e.g. fatty acid) at the hydrophobic channel of the protein leading to a reorientation of a monomer. This reorientation causes a transition between 'inactive' to 'active' states, causing alignment of C-terminal and membrane-docking sites (MDoS) side-by-side and putting the membrane-disruption sites (MDiS) in the same plane, exposed to solvent and in a symmetric position for both monomers. The MDoS region stabilizes the toxin on membrane by the interaction of charged residues with phospholipid head groups. Subsequently, the MDiS region destabilizes the membrane with penetration of hydrophobic residues. This insertion causes a disorganization of the membrane, allowing an uncontrolled influx of ions (i.e. calcium and sodium), and eventually triggering irreversible intracellular alterations and cell death. The sequence is that of Basic phospholipase A2 homolog Tbo-K49 from Craspedocephalus borneensis (Borneo pit viper).